The primary structure comprises 375 residues: Succinyl-diaminopimelate desuccinylase (375 aa).

His66 serves as a coordination point for Zn(2+). Asp68 is a catalytic residue. Asp99 serves as a coordination point for Zn(2+). The active-site Proton acceptor is Glu133. Glu134, Glu162, and His348 together coordinate Zn(2+).

The protein belongs to the peptidase M20A family. DapE subfamily. Homodimer. Requires Zn(2+) as cofactor. Co(2+) serves as cofactor.

It catalyses the reaction N-succinyl-(2S,6S)-2,6-diaminopimelate + H2O = (2S,6S)-2,6-diaminopimelate + succinate. It functions in the pathway amino-acid biosynthesis; L-lysine biosynthesis via DAP pathway; LL-2,6-diaminopimelate from (S)-tetrahydrodipicolinate (succinylase route): step 3/3. In terms of biological role, catalyzes the hydrolysis of N-succinyl-L,L-diaminopimelic acid (SDAP), forming succinate and LL-2,6-diaminopimelate (DAP), an intermediate involved in the bacterial biosynthesis of lysine and meso-diaminopimelic acid, an essential component of bacterial cell walls. The chain is Succinyl-diaminopimelate desuccinylase from Klebsiella pneumoniae (strain 342).